We begin with the raw amino-acid sequence, 192 residues long: Large ribosomal subunit protein bL25 (192 aa).

Belongs to the bacterial ribosomal protein bL25 family. CTC subfamily. In terms of assembly, part of the 50S ribosomal subunit; part of the 5S rRNA/L5/L18/L25 subcomplex. Contacts the 5S rRNA. Binds to the 5S rRNA independently of L5 and L18.

In terms of biological role, this is one of the proteins that binds to the 5S RNA in the ribosome where it forms part of the central protuberance. The chain is Large ribosomal subunit protein bL25 from Porphyromonas gingivalis (strain ATCC 33277 / DSM 20709 / CIP 103683 / JCM 12257 / NCTC 11834 / 2561).